The following is a 187-amino-acid chain: Threonylcarbamoyl-AMP synthase (187 aa).

The YrdC-like domain maps to 4–187 (TLTLSEAVTA…DARSGHILRL (184 aa)).

The protein belongs to the SUA5 family. TsaC subfamily.

Its subcellular location is the cytoplasm. It catalyses the reaction L-threonine + hydrogencarbonate + ATP = L-threonylcarbamoyladenylate + diphosphate + H2O. In terms of biological role, required for the formation of a threonylcarbamoyl group on adenosine at position 37 (t(6)A37) in tRNAs that read codons beginning with adenine. Catalyzes the conversion of L-threonine, HCO(3)(-)/CO(2) and ATP to give threonylcarbamoyl-AMP (TC-AMP) as the acyladenylate intermediate, with the release of diphosphate. This chain is Threonylcarbamoyl-AMP synthase, found in Xylella fastidiosa (strain 9a5c).